A 70-amino-acid chain; its full sequence is MGSKIFCCCRKTSEGSSTTVGFHNPRMFEQHHPRSFNLNTNSLHSAVPKRHPRLPYDNRMMLKACILRRP.

As to expression, expressed in Testis.

This chain is Testis-expressed protein 53, found in Homo sapiens (Human).